A 332-amino-acid polypeptide reads, in one-letter code: Ribosomal RNA small subunit methyltransferase C (332 aa).

It belongs to the methyltransferase superfamily. RsmC family. As to quaternary structure, monomer.

It is found in the cytoplasm. It catalyses the reaction guanosine(1207) in 16S rRNA + S-adenosyl-L-methionine = N(2)-methylguanosine(1207) in 16S rRNA + S-adenosyl-L-homocysteine + H(+). Specifically methylates the guanine in position 1207 of 16S rRNA in the 30S particle. In Pseudomonas putida (strain GB-1), this protein is Ribosomal RNA small subunit methyltransferase C.